The chain runs to 338 residues: Solute-binding protein Rfer_1840 (338 aa).

The N-terminal stretch at 1-25 is a signal peptide; sequence MQRRQLLQSMGGLAASTMPFSLAFA. Malonate is bound by residues Arg47, Tyr100, Arg175, Ser197, 214-218, and Glu244; that span reads TSSTS.

The protein belongs to the bacterial solute-binding protein 7 family. As to quaternary structure, the complex is comprised of an extracytoplasmic solute-binding protein and a heteromeric permease formed by two transmembrane proteins.

It localises to the periplasm. Its function is as follows. Solute-binding protein that binds malonate (in vitro). Probably part of a tripartite ATP-independent periplasmic (TRAP) transport system that mediates solute transport into the cytoplasm. In Albidiferax ferrireducens (strain ATCC BAA-621 / DSM 15236 / T118) (Rhodoferax ferrireducens), this protein is Solute-binding protein Rfer_1840.